Reading from the N-terminus, the 51-residue chain is MFDDLPPLSHQEQQRAVEEIQKLMAEGMSTAQAIKIIAEKIRAEHKAQSSK.

The protein belongs to the UPF0181 family.

The protein is UPF0181 protein VV2_0310 of Vibrio vulnificus (strain CMCP6).